Consider the following 843-residue polypeptide: MTDVEGYQPKSKGKIFPDMGESFFSSDEDSPATDAEIDENYDDNRETSEGRGERDTGAMVTGLKKPRKKTKSSRHTAADSSMNQMDAKDKALLQDTNSDIPADFVPDSVSGMFRSHDFSYLRLRPDHASRPLWISPSDGRIILESFSPLAEQAQDFLVTIAEPISRPSHIHEYKITAYSLYAAVSVGLETDDIISVLDRLSKVPVAESIINFIKGATISYGKVKLVIKHNRYFVETTQADILQMLLNDSVIGPLRIDSDHQVQPPEDVLQQQLQQTAGKPATNVNPNDVEAVFSAVIGGDNEREEEDDDIDAVHSFEIANESVEVVKKRCQEIDYPVLEEYDFRNDHRNPDLDIDLKPSTQIRPYQEKSLSKMFGNGRARSGIIVLPCGAGKTLVGITAACTIKKSVIVLCTSSVSVMQWRQQFLQWCTLQPENCAVFTSDNKEMFQTESGLVVSTYSMVANTRNRSHDSQKVMDFLTGREWGFIILDEVHVVPAAMFRRVVSTIAAHAKLGLTATLVREDDKIGDLNFLIGPKLYEANWMELSQKGHIANVQCAEVWCPMTAEFYQEYLRETARKRMLLYIMNPTKFQACQFLIQYHERRGDKIIVFSDNVYALQEYALKMGKPFIYGSTPQQERMNILQNFQYNDQINTIFLSKVGDTSIDLPEATCLIQISSHYGSRRQEAQRLGRILRAKRRNDEGFNAFFYSLVSKDTQEMYYSTKRQAFLVDQGYAFKVITHLHGMENIPNLAYASPRERRELLQEVLLKNEEAAGIEVGDDADNSVGRGSNGHKRFKSKAVRGEGSLSGLAGGEDMAYMEYSTNKNKELKEHHPLIRKMYYKNLKK.

The tract at residues methionine 1–methionine 85 is disordered. Residues serine 26–tyrosine 41 show a composition bias toward acidic residues. The span at aspartate 42–threonine 56 shows a compositional bias: basic and acidic residues. A compositionally biased stretch (basic residues) spans lysine 64 to arginine 74. The short motif at lysine 64–histidine 75 is the Nuclear localization signal element. The region spanning methionine 373–leucine 535 is the Helicase ATP-binding domain. Residue leucine 386–threonine 393 participates in ATP binding. A DEAH box motif is present at residues aspartate 488–histidine 491. The Helicase C-terminal domain occupies glutamine 589–glutamate 743. Serine 752 is subject to Phosphoserine.

This sequence belongs to the helicase family. RAD25/XPB subfamily. In terms of assembly, component of the 7-subunit TFIIH core complex composed of XPB/SSL2, XPD/RAD3, SSL1, TFB1, TFB2, TFB4 and TFB5, which is active in NER. The core complex associates with the 3-subunit CTD-kinase module TFIIK composed of CCL1, KIN28 and TFB3 to form the 10-subunit holoenzyme (holo-TFIIH) active in transcription. An additionnal subunit, TFB6, plays a role in the dissociation of the SSL2 helicase from TFIIH after transcription initiation. Interacts directly with TFB6. Mg(2+) serves as cofactor.

The protein resides in the nucleus. It carries out the reaction Couples ATP hydrolysis with the unwinding of duplex DNA by translocating in the 3'-5' direction.. The catalysed reaction is ATP + H2O = ADP + phosphate + H(+). In terms of biological role, ATP-dependent DNA translocase. Component of the general transcription and DNA repair factor IIH (TFIIH) core complex. When complexed to CDK-activating kinase (CAK), involved in RNA transcription by RNA polymerase II. May have 3'-5' helicase activity alone, the TFIIH core however has no 3'-5' helicase activity. Also involved in transcription-coupled nucleotide excision repair (NER) of damaged DNA. In NER, TFIIH acts by opening DNA around the lesion to allow the excision of the damaged oligonucleotide and its replacement by a new DNA fragment. The ATPase activity of XPB/SSL2, but not its helicase activity, is required for DNA opening. In transcription, TFIIH has an essential role in transcription initiation. When the pre-initiation complex (PIC) has been established, TFIIH is required for promoter opening and promoter escape. The ATP-dependent helicase activity of XPB/SSL2 is required for promoter opening and promoter escape. XPB/SSL2 acts as a double-stranded DNA translocase, promoting DNA opening by tracking in a 5'-3' dirction along the nontemplate promoter strand, rotating and inserting DNA into the Pol II active site cleft, leading to DNA unwinding. A dsDNA-stimulated ATPase, dATP and ATP are equally good substrates. May also use this translocase mechanism during DNA repair rather than physically wedging open damaged DNA. The sequence is that of General transcription and DNA repair factor IIH helicase/translocase subunit XPB/SSL2 from Saccharomyces cerevisiae (strain ATCC 204508 / S288c) (Baker's yeast).